An 89-amino-acid polypeptide reads, in one-letter code: Otospiralin (89 aa).

The signal sequence occupies residues 1 to 21 (MQPCVLWWLALGLLLGIPAGA).

The protein belongs to the otospiralin family. In terms of tissue distribution, ear specific. Expressed in the cochlea and vestibule, but not in the cochlear nerve, cochlear nucleus, spinal chord, muscle, cerebral cortex, cerebellum, diencephalon and olfactory bulb. In the cochlea, expressed in fibrocytes of the spiral limbus, spiral ligament and suprastrial zone. In the vestibule, expressed in cells located to the stroma below the macular and crista sensory epithelia and in the subepithelial layer of the walls of semicircular canals and maculae.

The protein localises to the secreted. In terms of biological role, may be essential for the survival of the neurosensory epithelium of the inner ear. In Rattus norvegicus (Rat), this protein is Otospiralin (Otos).